The sequence spans 557 residues: Dihydroxy-acid dehydratase (557 aa).

Cys47 is a [2Fe-2S] cluster binding site. Asp79 lines the Mg(2+) pocket. Cys120 serves as a coordination point for [2Fe-2S] cluster. Residues Asp121 and Lys122 each coordinate Mg(2+). N6-carboxylysine is present on Lys122. Cys192 serves as a coordination point for [2Fe-2S] cluster. Glu444 serves as a coordination point for Mg(2+). The active-site Proton acceptor is the Ser470.

Belongs to the IlvD/Edd family. As to quaternary structure, homodimer. [2Fe-2S] cluster serves as cofactor. Mg(2+) is required as a cofactor.

The catalysed reaction is (2R)-2,3-dihydroxy-3-methylbutanoate = 3-methyl-2-oxobutanoate + H2O. The enzyme catalyses (2R,3R)-2,3-dihydroxy-3-methylpentanoate = (S)-3-methyl-2-oxopentanoate + H2O. The protein operates within amino-acid biosynthesis; L-isoleucine biosynthesis; L-isoleucine from 2-oxobutanoate: step 3/4. It participates in amino-acid biosynthesis; L-valine biosynthesis; L-valine from pyruvate: step 3/4. Functionally, functions in the biosynthesis of branched-chain amino acids. Catalyzes the dehydration of (2R,3R)-2,3-dihydroxy-3-methylpentanoate (2,3-dihydroxy-3-methylvalerate) into 2-oxo-3-methylpentanoate (2-oxo-3-methylvalerate) and of (2R)-2,3-dihydroxy-3-methylbutanoate (2,3-dihydroxyisovalerate) into 2-oxo-3-methylbutanoate (2-oxoisovalerate), the penultimate precursor to L-isoleucine and L-valine, respectively. The sequence is that of Dihydroxy-acid dehydratase from Synechococcus sp. (strain CC9902).